We begin with the raw amino-acid sequence, 188 residues long: Sulfopyruvate decarboxylase subunit beta (188 aa).

This sequence belongs to the TPP enzyme family. As to quaternary structure, heterododecamer composed of 6 subunits alpha and 6 subunits beta. The cofactor is thiamine diphosphate.

It carries out the reaction 3-sulfopyruvate + H(+) = sulfoacetaldehyde + CO2. It functions in the pathway cofactor biosynthesis; coenzyme M biosynthesis; sulfoacetaldehyde from phosphoenolpyruvate and sulfite: step 4/4. With respect to regulation, inhibited by oxygen when heated in air at 80 degrees Celsius. The enzyme is reactivated by addition of dithionite. In terms of biological role, involved in the biosynthesis of the coenzyme M (2-mercaptoethanesulfonic acid). Catalyzes the decarboxylation of sulfopyruvate to sulfoacetaldehyde. The protein is Sulfopyruvate decarboxylase subunit beta of Methanocaldococcus jannaschii (strain ATCC 43067 / DSM 2661 / JAL-1 / JCM 10045 / NBRC 100440) (Methanococcus jannaschii).